Consider the following 189-residue polypeptide: ComE operon protein 2 (189 aa).

In terms of domain architecture, CMP/dCMP-type deaminase spans 5–132 (SWNQYFMAQS…PYAQELFEQA (128 aa)). A Zn(2+)-binding site is contributed by histidine 70. Glutamate 72 (proton donor) is an active-site residue. Zn(2+)-binding residues include cysteine 98 and cysteine 101.

Belongs to the cytidine and deoxycytidylate deaminase family. Zn(2+) is required as a cofactor.

In terms of biological role, dispensable for transformability. This is ComE operon protein 2 (comEB) from Bacillus subtilis (strain 168).